A 91-amino-acid polypeptide reads, in one-letter code: Large ribosomal subunit protein uL23c (91 aa).

It belongs to the universal ribosomal protein uL23 family. Part of the 50S ribosomal subunit.

The protein resides in the plastid. It is found in the chloroplast. Functionally, binds to 23S rRNA. In Chaetosphaeridium globosum (Charophycean green alga), this protein is Large ribosomal subunit protein uL23c (rpl23).